The chain runs to 37 residues: Large ribosomal subunit protein bL36c (37 aa).

It belongs to the bacterial ribosomal protein bL36 family.

The protein localises to the plastid. It localises to the chloroplast. The protein is Large ribosomal subunit protein bL36c of Cyanidioschyzon merolae (strain NIES-3377 / 10D) (Unicellular red alga).